Reading from the N-terminus, the 540-residue chain is Cytochrome P450 monooxygenase prx8 (540 aa).

A helical membrane pass occupies residues 50–68 (ALGAAIALFACACAYALVA). A glycan (N-linked (GlcNAc...) asparagine) is linked at Asn460. Cys483 is a heme binding site.

Belongs to the cytochrome P450 family. Heme is required as a cofactor.

Its subcellular location is the membrane. The protein operates within sesquiterpene biosynthesis. Cytochrome P450 monooxygenase; part of the gene cluster that mediates the biosynthesis of PR-toxin, a bicyclic sesquiterpene belonging to the eremophilane class and acting as a mycotoxin. The first step of the pathway is catalyzed by the aristolochene synthase which performs the cyclization of trans,trans-farnesyl diphosphate (FPP) to the bicyclic sesquiterpene aristolochene. Following the formation of aristolochene, the non-oxygenated aristolochene is converted to the trioxygenated intermediate eremofortin B, via 7-epi-neopetasone. This conversion appears to involve three enzymes, a hydroxysterol oxidase-like enzyme, the quinone-oxidase prx3 that forms the quinone-type-structure in the bicyclic nucleus of aristolochene with the C8-oxo group and the C-3 hydroxyl group, and the P450 monooxygenase prx9 that introduces the epoxide at the double bond between carbons 1 and 2. No monoxy or dioxy-intermediates have been reported to be released to the broth, so these three early oxidative reactions may be coupled together. Eremofortin B is further oxidized by another P450 monooxygenase, that introduces a second epoxide between carbons 7 and 11 prior to acetylation to eremofortin A by the acetyltransferase prx11. The second epoxidation may be performed by a second P450 monooxygenase. After the acetylation step, eremofortin A is converted to eremofortin C and then to PR-toxin. First the conversion of eremofortin A to eremofortin C proceeds by oxidation of the side chain of the molecule at C-12 and is catalyzed by the short-chain oxidoreductase prx1. The cytochrome P450 monooxygenase prx8 also plays a role in this step. The primary alcohol formed at C-12 is finally oxidized by the short-chain alcohol dehydrogenase prx4 that forms PR-toxin. The polypeptide is Cytochrome P450 monooxygenase prx8 (Penicillium rubens (strain ATCC 28089 / DSM 1075 / NRRL 1951 / Wisconsin 54-1255) (Penicillium chrysogenum)).